A 416-amino-acid chain; its full sequence is Gamma-glutamyl phosphate reductase (416 aa).

It belongs to the gamma-glutamyl phosphate reductase family.

The protein resides in the cytoplasm. It carries out the reaction L-glutamate 5-semialdehyde + phosphate + NADP(+) = L-glutamyl 5-phosphate + NADPH + H(+). It participates in amino-acid biosynthesis; L-proline biosynthesis; L-glutamate 5-semialdehyde from L-glutamate: step 2/2. Its function is as follows. Catalyzes the NADPH-dependent reduction of L-glutamate 5-phosphate into L-glutamate 5-semialdehyde and phosphate. The product spontaneously undergoes cyclization to form 1-pyrroline-5-carboxylate. The polypeptide is Gamma-glutamyl phosphate reductase (Streptococcus thermophilus (strain CNRZ 1066)).